An 88-amino-acid chain; its full sequence is Apolipoprotein C-I (88 aa).

The signal sequence occupies residues 1–26 (MRLILSLPVLVVVLSMVLEGPAPAQA).

Belongs to the apolipoprotein C1 family.

Its subcellular location is the secreted. Inhibitor of lipoprotein binding to the low density lipoprotein (LDL) receptor, LDL receptor-related protein, and very low density lipoprotein (VLDL) receptor. Associates with high density lipoproteins (HDL) and the triacylglycerol-rich lipoproteins in the plasma and makes up about 10% of the protein of the VLDL and 2% of that of HDL. Appears to interfere directly with fatty acid uptake and is also the major plasma inhibitor of cholesteryl ester transfer protein (CETP). Binds free fatty acids and reduces their intracellular esterification. Modulates the interaction of APOE with beta-migrating VLDL and inhibits binding of beta-VLDL to the LDL receptor-related protein. The chain is Apolipoprotein C-I (APOC1) from Lycaon pictus (African wild dog).